The following is a 253-amino-acid chain: UPF0246 protein Swit_4565 (253 aa).

Belongs to the UPF0246 family.

This Rhizorhabdus wittichii (strain DSM 6014 / CCUG 31198 / JCM 15750 / NBRC 105917 / EY 4224 / RW1) (Sphingomonas wittichii) protein is UPF0246 protein Swit_4565.